Reading from the N-terminus, the 513-residue chain is Glycogen synthase (513 aa).

Lys-47 provides a ligand contact to ADP-alpha-D-glucose.

Belongs to the glycosyltransferase 1 family. Bacterial/plant glycogen synthase subfamily.

It carries out the reaction [(1-&gt;4)-alpha-D-glucosyl](n) + ADP-alpha-D-glucose = [(1-&gt;4)-alpha-D-glucosyl](n+1) + ADP + H(+). It participates in glycan biosynthesis; glycogen biosynthesis. In terms of biological role, synthesizes alpha-1,4-glucan chains using ADP-glucose. The polypeptide is Glycogen synthase (Pseudomonas aeruginosa (strain ATCC 15692 / DSM 22644 / CIP 104116 / JCM 14847 / LMG 12228 / 1C / PRS 101 / PAO1)).